The primary structure comprises 290 residues: 3-hydroxyacyl-thioester dehydratase Y (290 aa).

The disordered stretch occupies residues 147–169 (FGGARGERPAAPEFPDRHPDARI). Residues 151 to 169 (RGERPAAPEFPDRHPDARI) show a composition bias toward basic and acidic residues. The 111-residue stretch at 161–271 (PDRHPDARID…AVFRTEVAGS (111 aa)) folds into the MaoC-like domain.

It belongs to the enoyl-CoA hydratase/isomerase family.

The catalysed reaction is a (3R)-3-hydroxyacyl-CoA = a (2E)-enoyl-CoA + H2O. The enzyme catalyses (3R)-hydroxyhexanoyl-CoA = (2E)-hexenoyl-CoA + H2O. It carries out the reaction (2E)-octenoyl-CoA + H2O = (3R)-hydroxyoctanoyl-CoA. It catalyses the reaction (3R)-3-hydroxydecanoyl-CoA = (2E)-decenoyl-CoA + H2O. The catalysed reaction is (3R)-3-hydroxydodecanoyl-CoA = (2E)-dodecenoyl-CoA + H2O. The enzyme catalyses (3R)-hydroxyhexadecanoyl-CoA = (2E)-hexadecenoyl-CoA + H2O. Its function is as follows. Shows trans-enoyl-CoA hydratase/3-hydroxyacyl-CoA dehydratase activity. In vitro, can hydrate various enoyl-CoA such as (2E)-hexenoyl-CoA, (2E)-octenoyl-CoA, (2E)-decenoyl-CoA, (2E)-dodecenoyl-CoA and (2E)-hexadecenoyl-CoA. May contribute to the persistence of the tuberculosis infection by inducing COX-2 expression in macrophages through MAPK-NF-kappaB signaling pathway. In Mycobacterium tuberculosis (strain ATCC 25618 / H37Rv), this protein is 3-hydroxyacyl-thioester dehydratase Y.